The following is a 403-amino-acid chain: Acetylornithine aminotransferase (403 aa).

Residues G107 to A108 and F140 contribute to the pyridoxal 5'-phosphate site. Residue R143 participates in N(2)-acetyl-L-ornithine binding. D225–Q228 provides a ligand contact to pyridoxal 5'-phosphate. Position 254 is an N6-(pyridoxal phosphate)lysine (K254). S282 lines the N(2)-acetyl-L-ornithine pocket. T283 lines the pyridoxal 5'-phosphate pocket.

Belongs to the class-III pyridoxal-phosphate-dependent aminotransferase family. ArgD subfamily. Homodimer. Requires pyridoxal 5'-phosphate as cofactor.

It is found in the cytoplasm. It carries out the reaction N(2)-acetyl-L-ornithine + 2-oxoglutarate = N-acetyl-L-glutamate 5-semialdehyde + L-glutamate. The protein operates within amino-acid biosynthesis; L-arginine biosynthesis; N(2)-acetyl-L-ornithine from L-glutamate: step 4/4. This chain is Acetylornithine aminotransferase, found in Vibrio vulnificus (strain YJ016).